Reading from the N-terminus, the 1438-residue chain is Membrane-anchored lipid-binding protein YSP2 (1438 aa).

The segment covering 1–17 has biased composition (basic and acidic residues); sequence MRDEATRKKRSFSDGHF. 7 disordered regions span residues 1-97, 174-194, 200-219, 285-308, 338-418, 455-485, and 505-543; these read MRDE…SHTP, KVKH…NERP, QKDD…SAPN, QQQH…QNPN, TSGP…KVKF, DENN…LGPK, and SQSN…RYSS. The Cytoplasmic segment spans residues 1 to 1277; that stretch reads MRDEATRKKR…SAFSMLQQVN (1277 aa). Serine 13 carries the post-translational modification Phosphoserine. Residues 18 to 29 are compositionally biased toward basic residues; it reads FKKLKLMSRKKQ. The segment covering 30-44 has biased composition (basic and acidic residues); the sequence is PVMERSKTTRTRKES. Residues 45–58 are compositionally biased toward low complexity; sequence TNSAAKSSLSLRRA. Over residues 74-97 the composition is skewed to polar residues; the sequence is IGSTNEGVAGNSGSNSPAQYSHTP. Composition is skewed to low complexity over residues 286–298 and 374–398; these read QQHP…GPLP and PTNT…ANSN. The residue at position 411 (serine 411) is a Phosphoserine. Over residues 455–470 the composition is skewed to low complexity; it reads DENNTNNNPNASSTNL. The segment covering 471-485 has biased composition (polar residues); the sequence is SHISKSNVNNNLGPK. Serine 596 is subject to Phosphoserine. Residues 648-716 form the GRAM domain; sequence EFHTLFKDCD…KEIVQIEKKT (69 aa). The tract at residues 777–843 is disordered; it reads SSSAFFDDSD…LGPNKHSPTT (67 aa). Residues 783-800 show a composition bias toward acidic residues; sequence DDSDDNDDDGDLDDDDPD. The span at 818–832 shows a compositional bias: polar residues; sequence NESNDLGKNQKSTNY. A VASt 1 domain is found at 851–1018; the sequence is NDHLVIEANI…EIKKILSDED (168 aa). Serine 1032 carries the phosphoserine modification. The 167-residue stretch at 1059–1225 folds into the VASt 2 domain; that stretch reads DDTVIDEKIN…DLKKIISNAS (167 aa). The interval 1225–1257 is disordered; it reads SSTKKKSRRRGKTVNKRKSSPSTIKNEKNEENF. Residues 1227 to 1243 are compositionally biased toward basic residues; the sequence is TKKKSRRRGKTVNKRKS. Residues 1278-1298 traverse the membrane as a helical segment; sequence ITSVQGIMTIISFFICLIFFF. Residues 1299 to 1438 lie on the Lumenal side of the membrane; that stretch reads RLLFHSKNTS…DNTSATNQLL (140 aa). 3 N-linked (GlcNAc...) asparagine glycosylation sites follow: asparagine 1306, asparagine 1373, and asparagine 1430.

This sequence belongs to the YSP2 family.

Its subcellular location is the mitochondrion membrane. The protein resides in the endoplasmic reticulum membrane. Functionally, involved in induction of programmed cell death in response to reactive oxygen species (ROS). May be involved in sterol transfer between intracellular membranes. The protein is Membrane-anchored lipid-binding protein YSP2 of Saccharomyces cerevisiae (strain ATCC 204508 / S288c) (Baker's yeast).